The chain runs to 500 residues: Protein adenylyltransferase Fic (500 aa).

A helical membrane pass occupies residues 39 to 59; it reads LSFLIFFVIGSLFSGLMFALL. TPR repeat units lie at residues 122–155 and 156–190; these read ALSS…SPRH and PEIL…NPSH. An Inhibitory (S/T)XXXE(G/N) motif motif is present at residues 247–252; the sequence is SVGIEG. Residues E251 and 333–336 each bind ATP; that span reads VGGH. In terms of domain architecture, Fido spans 302 to 437; it reads ITLKDLLEIH…IRPFVRFIAD (136 aa). Residue H380 is part of the active site. ATP-binding positions include 384-391, 416-417, and N424; these read DGNGRTSR and YY. A disordered region spans residues 477–500; that stretch reads GREGGSTVHEGSGTGDSIRIGTMW.

This sequence belongs to the fic family. As to quaternary structure, homodimer.

The protein localises to the membrane. The catalysed reaction is L-tyrosyl-[protein] + ATP = O-(5'-adenylyl)-L-tyrosyl-[protein] + diphosphate. It catalyses the reaction L-threonyl-[protein] + ATP = 3-O-(5'-adenylyl)-L-threonyl-[protein] + diphosphate. It carries out the reaction 3-O-(5'-adenylyl)-L-threonyl-[protein] + H2O = L-threonyl-[protein] + AMP + H(+). With respect to regulation, the side chain of Glu-251 determines which of the two opposing activities (AMPylase or de-AMPylase) will take place. In response to endoplasmic reticulum stress, mediates de-AMPylase activity. Adenylyltransferase activity is inhibited by the inhibitory helix present at the N-terminus: Glu-251 binds ATP and competes with ATP-binding at Arg-391, thereby preventing adenylyltransferase activity. In unstressed cells, disengagement of Glu-251 promotes adenylyltransferase activity. Activation dissociates ATP-binding from Glu-251, allowing ordered binding of the entire ATP moiety with the alpha-phosphate in an orientation that is productive for accepting an incoming target hydroxyl side chain. Functionally, protein that can both mediate the addition of adenosine 5'-monophosphate (AMP) to specific residues of target proteins (AMPylation), and the removal of the same modification from target proteins (de-AMPylation), depending on the context. The side chain of Glu-251 determines which of the two opposing activities (AMPylase or de-AMPylase) will take place. Acts as a key regulator of the unfolded protein response (UPR) by mediating AMPylation or de-AMPylation of Hsc70-3/BiP. In unstressed cells, acts as an adenylyltransferase by mediating AMPylation of Hsc70-3/BiP at 'Thr-518', thereby inactivating it. In response to endoplasmic reticulum stress, acts as a phosphodiesterase by mediating removal of ATP (de-AMPylation) from Hsc70-3/BiP at 'Thr-518', leading to restore HSPA5/BiP activity. The protein is Protein adenylyltransferase Fic of Culex quinquefasciatus (Southern house mosquito).